Consider the following 376-residue polypeptide: Dihydroorotate dehydrogenase (quinone) (376 aa).

FMN contacts are provided by residues 78-82 (AGFDK) and Thr102. Position 82 (Lys82) interacts with substrate. Residue 127–131 (NRMGF) participates in substrate binding. Positions 157 and 190 each coordinate FMN. Asn190 lines the substrate pocket. Residue Ser193 is the Nucleophile of the active site. Position 195 (Asn195) interacts with substrate. FMN is bound by residues Lys228 and Thr256. Substrate is bound at residue 257–258 (NT). FMN contacts are provided by residues Gly286, Gly315, and 336-337 (YT).

This sequence belongs to the dihydroorotate dehydrogenase family. Type 2 subfamily. In terms of assembly, monomer. FMN is required as a cofactor.

It localises to the cell membrane. It catalyses the reaction (S)-dihydroorotate + a quinone = orotate + a quinol. Its pathway is pyrimidine metabolism; UMP biosynthesis via de novo pathway; orotate from (S)-dihydroorotate (quinone route): step 1/1. Its function is as follows. Catalyzes the conversion of dihydroorotate to orotate with quinone as electron acceptor. The sequence is that of Dihydroorotate dehydrogenase (quinone) from Trichormus variabilis (strain ATCC 29413 / PCC 7937) (Anabaena variabilis).